Consider the following 228-residue polypeptide: Protein LIAT1 (228 aa).

A disordered region spans residues 1-108; that stretch reads MAGRGGTGAA…RAEPRDKEEN (108 aa). A compositionally biased stretch (acidic residues) spans 12–24; sequence YGEEGEEEEEEEA. A lysine-rich domain region spans residues 49 to 71; the sequence is KRKVKKKKKKKKTKGSGKGDADK. Residues 50–63 are compositionally biased toward basic residues; sequence RKVKKKKKKKKTKG. The span at 90 to 108 shows a compositional bias: basic and acidic residues; the sequence is LNPHKDHGLRAEPRDKEEN. The interaction with ATE1 stretch occupies residues 113–165; that stretch reads PYSYSINHPCFAEIEDTLSSQINESLRWDGILTDPEAEKERIRIYKLNRRKRY. Repeat unit 1 spans residues 169–178; sequence ALKCFHSDPC.

Self-associates (via Lys-rich domain); targets LIAT1 to the nucleolus. Interacts with ATE1; it is not a substrate of ATE1, the interaction takes place in the cytoplasm and seems to increase ATE1 arginyltransferase activity. Interacts with JMJD6 and MRPS14. Post-translationally, post-translationally modified by JMJD6 lysyl-hydroxylase activity at its Lys-rich domain, which inhibits its self-association and nucleolar localization. Highly expressed in spleen, thymus, liver and brown adipose tissue. Moderately expressed in liver, testis and lung.

The protein resides in the nucleus. It localises to the nucleolus. It is found in the cytoplasm. Functionally, participates in nucleolar liquid-liquid phase separation (LLPS) through its N-terminal intrinsically disordered region (IDR). May be involved in ATE1-mediated N-terminal arginylation. In Mus musculus (Mouse), this protein is Protein LIAT1.